The following is a 222-amino-acid chain: 2-hydroxy-3-keto-5-methylthiopentenyl-1-phosphate phosphatase (222 aa).

It belongs to the HAD-like hydrolase superfamily. MtnX family.

It carries out the reaction 2-hydroxy-5-methylsulfanyl-3-oxopent-1-enyl phosphate + H2O = 1,2-dihydroxy-5-(methylsulfanyl)pent-1-en-3-one + phosphate. It functions in the pathway amino-acid biosynthesis; L-methionine biosynthesis via salvage pathway; L-methionine from S-methyl-5-thio-alpha-D-ribose 1-phosphate: step 4/6. In terms of biological role, dephosphorylates 2-hydroxy-3-keto-5-methylthiopentenyl-1-phosphate (HK-MTPenyl-1-P) yielding 1,2-dihydroxy-3-keto-5-methylthiopentene (DHK-MTPene). The polypeptide is 2-hydroxy-3-keto-5-methylthiopentenyl-1-phosphate phosphatase (Brevibacillus brevis (strain 47 / JCM 6285 / NBRC 100599)).